We begin with the raw amino-acid sequence, 415 residues long: Serine hydroxymethyltransferase (415 aa).

(6S)-5,6,7,8-tetrahydrofolate contacts are provided by residues Leu-117 and 121–123 (GHL). Lys-226 carries the N6-(pyridoxal phosphate)lysine modification. Residues Glu-241 and 349–351 (SPF) contribute to the (6S)-5,6,7,8-tetrahydrofolate site.

This sequence belongs to the SHMT family. In terms of assembly, homodimer. It depends on pyridoxal 5'-phosphate as a cofactor.

It localises to the cytoplasm. The enzyme catalyses (6R)-5,10-methylene-5,6,7,8-tetrahydrofolate + glycine + H2O = (6S)-5,6,7,8-tetrahydrofolate + L-serine. The protein operates within one-carbon metabolism; tetrahydrofolate interconversion. It participates in amino-acid biosynthesis; glycine biosynthesis; glycine from L-serine: step 1/1. Functionally, catalyzes the reversible interconversion of serine and glycine with tetrahydrofolate (THF) serving as the one-carbon carrier. This reaction serves as the major source of one-carbon groups required for the biosynthesis of purines, thymidylate, methionine, and other important biomolecules. Also exhibits THF-independent aldolase activity toward beta-hydroxyamino acids, producing glycine and aldehydes, via a retro-aldol mechanism. This chain is Serine hydroxymethyltransferase, found in Geobacter metallireducens (strain ATCC 53774 / DSM 7210 / GS-15).